Consider the following 143-residue polypeptide: Fluoride-specific ion channel FluC 1 (143 aa).

4 consecutive transmembrane segments (helical) span residues 13–33 (VLVG…SVIA), 42–62 (GVPW…ATLL), 80–100 (LCIG…TVEA), and 111–131 (WGIA…WVVI). Na(+) is bound by residues Gly88 and Thr91.

Belongs to the fluoride channel Fluc/FEX (TC 1.A.43) family.

The protein localises to the cell membrane. The enzyme catalyses fluoride(in) = fluoride(out). Na(+) is not transported, but it plays an essential structural role and its presence is essential for fluoride channel function. Fluoride-specific ion channel. Important for reducing fluoride concentration in the cell, thus reducing its toxicity. The polypeptide is Fluoride-specific ion channel FluC 1 (Cutibacterium acnes (strain DSM 16379 / KPA171202) (Propionibacterium acnes)).